Here is a 461-residue protein sequence, read N- to C-terminus: Argininosuccinate lyase (461 aa).

Belongs to the lyase 1 family. Argininosuccinate lyase subfamily.

The protein localises to the cytoplasm. It carries out the reaction 2-(N(omega)-L-arginino)succinate = fumarate + L-arginine. The protein operates within amino-acid biosynthesis; L-arginine biosynthesis; L-arginine from L-ornithine and carbamoyl phosphate: step 3/3. This is Argininosuccinate lyase from Chlorobium chlorochromatii (strain CaD3).